Reading from the N-terminus, the 218-residue chain is Cytochrome b6 (218 aa).

Residues 35 to 55 (IFYCLGGITLVCFLIQFATGF) form a helical membrane-spanning segment. Cys-38 is a heme c binding site. His-89 and His-103 together coordinate heme b. The next 3 membrane-spanning stretches (helical) occupy residues 93–113 (ASMM…TGGF), 119–139 (LTWV…VTGY), and 189–209 (LHTF…FLMI). 2 residues coordinate heme b: His-190 and His-205.

The protein belongs to the cytochrome b family. PetB subfamily. The 4 large subunits of the cytochrome b6-f complex are cytochrome b6, subunit IV (17 kDa polypeptide, PetD), cytochrome f and the Rieske protein, while the 4 small subunits are PetG, PetL, PetM and PetN. The complex functions as a dimer. It depends on heme b as a cofactor. Requires heme c as cofactor.

The protein localises to the cellular thylakoid membrane. In terms of biological role, component of the cytochrome b6-f complex, which mediates electron transfer between photosystem II (PSII) and photosystem I (PSI), cyclic electron flow around PSI, and state transitions. The chain is Cytochrome b6 from Prochlorococcus marinus subsp. pastoris (strain CCMP1986 / NIES-2087 / MED4).